The primary structure comprises 206 residues: ATP-dependent Clp protease proteolytic subunit 1 (206 aa).

Serine 106 functions as the Nucleophile in the catalytic mechanism. Histidine 131 is a catalytic residue.

The protein belongs to the peptidase S14 family. As to quaternary structure, fourteen ClpP subunits assemble into 2 heptameric rings which stack back to back to give a disk-like structure with a central cavity, resembling the structure of eukaryotic proteasomes.

The protein localises to the cytoplasm. It catalyses the reaction Hydrolysis of proteins to small peptides in the presence of ATP and magnesium. alpha-casein is the usual test substrate. In the absence of ATP, only oligopeptides shorter than five residues are hydrolyzed (such as succinyl-Leu-Tyr-|-NHMec, and Leu-Tyr-Leu-|-Tyr-Trp, in which cleavage of the -Tyr-|-Leu- and -Tyr-|-Trp bonds also occurs).. Functionally, cleaves peptides in various proteins in a process that requires ATP hydrolysis. Has a chymotrypsin-like activity. Plays a major role in the degradation of misfolded proteins. This chain is ATP-dependent Clp protease proteolytic subunit 1, found in Methylococcus capsulatus (strain ATCC 33009 / NCIMB 11132 / Bath).